The sequence spans 352 residues: 4-hydroxy-2-oxovalerate aldolase (352 aa).

A Pyruvate carboxyltransferase domain is found at 14–266 (VRMTDTSLRD…KTGIDFFDIA (253 aa)). Position 22–23 (22–23 (RD)) interacts with substrate. Residue D23 participates in Mn(2+) binding. Catalysis depends on H26, which acts as the Proton acceptor. The substrate site is built by S176 and H205. 2 residues coordinate Mn(2+): H205 and H207. Y296 serves as a coordination point for substrate.

The protein belongs to the 4-hydroxy-2-oxovalerate aldolase family.

It carries out the reaction (S)-4-hydroxy-2-oxopentanoate = acetaldehyde + pyruvate. This is 4-hydroxy-2-oxovalerate aldolase from Mycolicibacterium gilvum (strain PYR-GCK) (Mycobacterium gilvum (strain PYR-GCK)).